We begin with the raw amino-acid sequence, 876 residues long: Leucine--tRNA ligase (876 aa).

The 'HIGH' region signature appears at 42–52 (PYPSGKLHMGH). Positions 634-638 (KMSKS) match the 'KMSKS' region motif. Lys637 lines the ATP pocket.

Belongs to the class-I aminoacyl-tRNA synthetase family.

It localises to the cytoplasm. It catalyses the reaction tRNA(Leu) + L-leucine + ATP = L-leucyl-tRNA(Leu) + AMP + diphosphate. The polypeptide is Leucine--tRNA ligase (Neisseria gonorrhoeae (strain ATCC 700825 / FA 1090)).